We begin with the raw amino-acid sequence, 120 residues long: Ribosome-binding factor A (120 aa).

The protein belongs to the RbfA family. Monomer. Binds 30S ribosomal subunits, but not 50S ribosomal subunits or 70S ribosomes.

Its subcellular location is the cytoplasm. Its function is as follows. One of several proteins that assist in the late maturation steps of the functional core of the 30S ribosomal subunit. Associates with free 30S ribosomal subunits (but not with 30S subunits that are part of 70S ribosomes or polysomes). Required for efficient processing of 16S rRNA. May interact with the 5'-terminal helix region of 16S rRNA. This chain is Ribosome-binding factor A, found in Rickettsia peacockii (strain Rustic).